The following is a 384-amino-acid chain: Glucans biosynthesis protein C (384 aa).

10 consecutive transmembrane segments (helical) span residues 17–37, 54–74, 91–111, 140–160, 173–193, 212–232, 240–260, 274–294, 311–331, and 338–358; these read AWLM…THSW, FIHA…SYML, VGIP…ILLQ, LWFL…FTWF, AISL…YAAI, FIVM…LAFI, FTTP…AYLL, TESV…FSLG, ASLF…AYIT, and LIGF…LYEI.

This sequence belongs to the acyltransferase 3 family. OpgC subfamily.

Its subcellular location is the cell membrane. Its pathway is glycan metabolism; osmoregulated periplasmic glucan (OPG) biosynthesis. In terms of biological role, necessary for the succinyl substitution of periplasmic glucans. Could catalyze the transfer of succinyl residues from the cytoplasmic side of the membrane to the nascent glucan backbones on the periplasmic side of the membrane. The polypeptide is Glucans biosynthesis protein C (Salmonella choleraesuis (strain SC-B67)).